The following is a 508-amino-acid chain: TATA box-binding protein-like 1 (508 aa).

Disordered regions lie at residues 145 to 190 (QISY…QMHH), 236 to 262 (EPIP…PMPD), and 456 to 479 (QKKR…FDDS).

This sequence belongs to the TBP family.

It is found in the nucleus. May be a general transcription factor. Plays an essential role for RNA polymerase II/ama-1 transcription in early embryos whereby it activates a subset of RNA polymerase II promoters and facilitates the reestablishment of transcription after mitosis. The protein is TATA box-binding protein-like 1 of Caenorhabditis elegans.